A 99-amino-acid polypeptide reads, in one-letter code: Citrate lyase acyl carrier protein (99 aa).

An O-(phosphoribosyl dephospho-coenzyme A)serine modification is found at Ser14.

Belongs to the CitD family. As to quaternary structure, oligomer with a subunit composition of (alpha,beta,gamma)6.

It is found in the cytoplasm. Its function is as follows. Covalent carrier of the coenzyme of citrate lyase. The protein is Citrate lyase acyl carrier protein of Edwardsiella ictaluri (strain 93-146).